Consider the following 397-residue polypeptide: MNKNRGFTPLAVVLMLSGSLALTGCDDKQAQQGGQQMPAVGVVTVKTEPLQITTELPGRTSAYRIAEVRPQVSGIILKRNFKEGSDIEAGVSLYQIDPATYQATYDSAKGDLAKAQAAANIAQLTVNRYQKLLGTQYISKQEYDQALADAQQANAAVTAAKAAVETARINLAYTKVTSPISGRIGKSNVTEGALVQNGQATALATVQQLDPIYVDVTQSSNDFLRLKQELANGTLKQENGKAKVSLITSDGIKFPQDGTLEFSDVTVDQTTGSITLRAIFPNPDHTLLPGMFVRARLEEGLNPNAILVPQQGVTRTPRGDATVLVVGADDKVETRPIVASQAIGDKWLVTEGLKAGDRVVISGLQKVRPGVQVKAQEVTADNNQQAASGAQPEQSKS.

The N-terminal stretch at 1-24 (MNKNRGFTPLAVVLMLSGSLALTG) is a signal peptide. Residue Cys25 is the site of N-palmitoyl cysteine attachment. The S-diacylglycerol cysteine moiety is linked to residue Cys25. Residues 98–172 (PATYQATYDS…AVETARINLA (75 aa)) adopt a coiled-coil conformation. Residues 377–397 (EVTADNNQQAASGAQPEQSKS) form a disordered region. Over residues 379–397 (TADNNQQAASGAQPEQSKS) the composition is skewed to polar residues.

The protein belongs to the membrane fusion protein (MFP) (TC 8.A.1) family. Monomeric in solution. Homotrimeric; interacts independently with AcrB and TolC as well as AcrZ. Part of the AcrA-AcrB-TolC efflux pump.

It is found in the cell inner membrane. AcrA-AcrB-AcrZ-TolC is a drug efflux protein complex with broad substrate specificity that uses the proton motive force to export substrates. This subunit may act as an adapter protein that links AcrB and TolC stably together. The sequence is that of Multidrug efflux pump subunit AcrA (acrA) from Escherichia coli O157:H7.